The primary structure comprises 404 residues: Flavohemoprotein (404 aa).

The 138-residue stretch at 1-138 (MLSEQTRSLV…LADTLIGIEN (138 aa)) folds into the Globin domain. His85 lines the heme b pocket. Residues Tyr95 and Glu137 each act as charge relay system in the active site. A reductase region spans residues 149–404 (GGWSGWRPFR…EVFGSHPGDD (256 aa)). Positions 152 to 263 (SGWRPFRVAK…SAPQGDFFLH (112 aa)) constitute an FAD-binding FR-type domain. Residues Tyr190 and 206–209 (RQYS) each bind FAD. An NADP(+)-binding site is contributed by 276–281 (GVGQTP). An FAD-binding site is contributed by 396–399 (VFGS).

This sequence belongs to the globin family. Two-domain flavohemoproteins subfamily. In the C-terminal section; belongs to the flavoprotein pyridine nucleotide cytochrome reductase family. Heme b serves as cofactor. Requires FAD as cofactor.

The enzyme catalyses 2 nitric oxide + NADPH + 2 O2 = 2 nitrate + NADP(+) + H(+). It catalyses the reaction 2 nitric oxide + NADH + 2 O2 = 2 nitrate + NAD(+) + H(+). Functionally, is involved in NO detoxification in an aerobic process, termed nitric oxide dioxygenase (NOD) reaction that utilizes O(2) and NAD(P)H to convert NO to nitrate, which protects the bacterium from various noxious nitrogen compounds. Therefore, plays a central role in the inducible response to nitrosative stress. The protein is Flavohemoprotein of Chromobacterium violaceum (strain ATCC 12472 / DSM 30191 / JCM 1249 / CCUG 213 / NBRC 12614 / NCIMB 9131 / NCTC 9757 / MK).